Consider the following 101-residue polypeptide: Large ribosomal subunit protein bL21 (101 aa).

This sequence belongs to the bacterial ribosomal protein bL21 family. In terms of assembly, part of the 50S ribosomal subunit. Contacts protein L20.

Its function is as follows. This protein binds to 23S rRNA in the presence of protein L20. In Metamycoplasma arthritidis (strain 158L3-1) (Mycoplasma arthritidis), this protein is Large ribosomal subunit protein bL21.